Here is a 271-residue protein sequence, read N- to C-terminus: Orotidine 5'-phosphate decarboxylase (271 aa).

Lys95 (proton donor) is an active-site residue.

It belongs to the OMP decarboxylase family. Type 2 subfamily.

It catalyses the reaction orotidine 5'-phosphate + H(+) = UMP + CO2. Its pathway is pyrimidine metabolism; UMP biosynthesis via de novo pathway; UMP from orotate: step 2/2. The sequence is that of Orotidine 5'-phosphate decarboxylase from Janthinobacterium sp. (strain Marseille) (Minibacterium massiliensis).